We begin with the raw amino-acid sequence, 268 residues long: Putative hydro-lyase ABAYE2440 (268 aa).

It belongs to the D-glutamate cyclase family.

In Acinetobacter baumannii (strain AYE), this protein is Putative hydro-lyase ABAYE2440.